We begin with the raw amino-acid sequence, 510 residues long: Lysine--tRNA ligase (510 aa).

Mg(2+) is bound by residues Glu-420 and Glu-427.

This sequence belongs to the class-II aminoacyl-tRNA synthetase family. Homodimer. Mg(2+) serves as cofactor.

It is found in the cytoplasm. The enzyme catalyses tRNA(Lys) + L-lysine + ATP = L-lysyl-tRNA(Lys) + AMP + diphosphate. The chain is Lysine--tRNA ligase from Psychrobacter sp. (strain PRwf-1).